The following is a 241-amino-acid chain: Tetrahydromethanopterin S-methyltransferase subunit A (241 aa).

The Cytoplasmic portion of the chain corresponds to M1–G220. H85 provides a ligand contact to 5-hydroxybenzimidazolylcob(I)amide. A helical transmembrane segment spans residues K221 to F241.

It belongs to the MtrA family. As to quaternary structure, the complex is composed of 8 subunits; MtrA, MtrB, MtrC, MtrD, MtrE, MtrF, MtrG and MtrH. The cofactor is 5-hydroxybenzimidazolylcob(I)amide.

The protein localises to the cell membrane. The enzyme catalyses 5-methyl-5,6,7,8-tetrahydromethanopterin + coenzyme M + 2 Na(+)(in) = 5,6,7,8-tetrahydromethanopterin + methyl-coenzyme M + 2 Na(+)(out). Its pathway is one-carbon metabolism; methanogenesis from CO(2); methyl-coenzyme M from 5,10-methylene-5,6,7,8-tetrahydromethanopterin: step 2/2. Its function is as follows. Part of a complex that catalyzes the formation of methyl-coenzyme M and tetrahydromethanopterin from coenzyme M and methyl-tetrahydromethanopterin. This is an energy-conserving, sodium-ion translocating step. This chain is Tetrahydromethanopterin S-methyltransferase subunit A, found in Methanocaldococcus jannaschii (strain ATCC 43067 / DSM 2661 / JAL-1 / JCM 10045 / NBRC 100440) (Methanococcus jannaschii).